The following is a 545-amino-acid chain: Chaperonin GroEL (545 aa).

ATP is bound by residues 30–33 (TLGP), Lys-51, 87–91 (DGTTT), Gly-415, 479–481 (NAA), and Asp-495. The segment at 526–545 (KDDAPAPAMPDMGGMGGMGM) is disordered.

This sequence belongs to the chaperonin (HSP60) family. As to quaternary structure, forms a cylinder of 14 subunits composed of two heptameric rings stacked back-to-back. Interacts with the co-chaperonin GroES.

The protein resides in the cytoplasm. It catalyses the reaction ATP + H2O + a folded polypeptide = ADP + phosphate + an unfolded polypeptide.. Its function is as follows. Together with its co-chaperonin GroES, plays an essential role in assisting protein folding. The GroEL-GroES system forms a nano-cage that allows encapsulation of the non-native substrate proteins and provides a physical environment optimized to promote and accelerate protein folding. In Paracidovorax citrulli (strain AAC00-1) (Acidovorax citrulli), this protein is Chaperonin GroEL.